The chain runs to 115 residues: Splicing factor 3B subunit 6-like protein (115 aa).

Positions 9-22 are interaction with pre-mRNA branch site; that stretch reads EVNSILFIKNLSFK. The RRM domain occupies 12 to 87; that stretch reads SILFIKNLSF…RYLVVHYYNP (76 aa).

Its subcellular location is the nucleus. Necessary for the splicing of pre-mRNA. This is Splicing factor 3B subunit 6-like protein from Schizosaccharomyces pombe (strain 972 / ATCC 24843) (Fission yeast).